We begin with the raw amino-acid sequence, 434 residues long: Aspartate--tRNA(Asp/Asn) ligase (434 aa).

Position 167 (Glu-167) interacts with L-aspartate. The aspartate stretch occupies residues Gln-189–Lys-192. L-aspartate is bound at residue Arg-211. ATP contacts are provided by residues Arg-211–Glu-213, Arg-219–Leu-221, and Glu-357. Glu-357 and Ser-360 together coordinate Mg(2+). 2 residues coordinate L-aspartate: Ser-360 and Arg-364. Gly-405–Arg-408 is an ATP binding site.

The protein belongs to the class-II aminoacyl-tRNA synthetase family. Type 2 subfamily. As to quaternary structure, homodimer. Mg(2+) is required as a cofactor.

It is found in the cytoplasm. It catalyses the reaction tRNA(Asx) + L-aspartate + ATP = L-aspartyl-tRNA(Asx) + AMP + diphosphate. Its function is as follows. Aspartyl-tRNA synthetase with relaxed tRNA specificity since it is able to aspartylate not only its cognate tRNA(Asp) but also tRNA(Asn). Reaction proceeds in two steps: L-aspartate is first activated by ATP to form Asp-AMP and then transferred to the acceptor end of tRNA(Asp/Asn). The chain is Aspartate--tRNA(Asp/Asn) ligase from Haloquadratum walsbyi (strain DSM 16790 / HBSQ001).